Here is a 184-residue protein sequence, read N- to C-terminus: Sec-independent protein translocase protein TatB (184 aa).

Residues 1–21 (MFDIGFSELVLLFVVGLIVLG) form a helical membrane-spanning segment. Acidic residues predominate over residues 149 to 168 (AEEGEPMLEMGESDFSEDEQ). The tract at residues 149 to 184 (AEEGEPMLEMGESDFSEDEQATASSNETIENIKEKV) is disordered.

Belongs to the TatB family. As to quaternary structure, the Tat system comprises two distinct complexes: a TatABC complex, containing multiple copies of TatA, TatB and TatC subunits, and a separate TatA complex, containing only TatA subunits. Substrates initially bind to the TatABC complex, which probably triggers association of the separate TatA complex to form the active translocon.

Its subcellular location is the cell inner membrane. Functionally, part of the twin-arginine translocation (Tat) system that transports large folded proteins containing a characteristic twin-arginine motif in their signal peptide across membranes. Together with TatC, TatB is part of a receptor directly interacting with Tat signal peptides. TatB may form an oligomeric binding site that transiently accommodates folded Tat precursor proteins before their translocation. The protein is Sec-independent protein translocase protein TatB of Histophilus somni (strain 129Pt) (Haemophilus somnus).